Here is a 343-residue protein sequence, read N- to C-terminus: Membrane progestin receptor delta (343 aa).

The Cytoplasmic segment spans residues methionine 1–threonine 49. A helical transmembrane segment spans residues valine 50–glycine 70. The Extracellular portion of the chain corresponds to serine 71–tyrosine 79. Residues histidine 80 to alanine 100 traverse the membrane as a helical segment. The Cytoplasmic portion of the chain corresponds to histidine 101–histidine 112. Residues isoleucine 113–tyrosine 133 form a helical membrane-spanning segment. The Extracellular portion of the chain corresponds to alanine 134–arginine 146. A helical membrane pass occupies residues leucine 147 to cysteine 167. Over tyrosine 168–aspartate 216 the chain is Cytoplasmic. A helical membrane pass occupies residues alanine 217 to alanine 237. At alanine 238 to glutamine 257 the chain is on the extracellular side. A helical membrane pass occupies residues leucine 258–methionine 278. Over glycine 279–threonine 291 the chain is Cytoplasmic. The chain crosses the membrane as a helical span at residues leucine 292–isoleucine 312. The Extracellular segment spans residues alanine 313–glutamine 343.

This sequence belongs to the ADIPOR family. In terms of assembly, homodimer.

The protein resides in the cell membrane. Plasma membrane progesterone (P4) receptor coupled to G proteins. Seems to act through a G(s) mediated pathway. Involved in neurosteroid inhibition of apoptosis. May be involved in regulating rapid P4 signaling in the nervous system. Also binds dehydroepiandrosterone (DHEA), pregnanolone, pregnenolone and allopregnanolone. The sequence is that of Membrane progestin receptor delta from Mus musculus (Mouse).